The chain runs to 762 residues: Alpha-1,3-mannosyltransferase MNN1 (762 aa).

Residues Met-1–Ser-16 lie on the Cytoplasmic side of the membrane. Residues Cys-17 to Phe-33 form a helical; Signal-anchor for type II membrane protein membrane-spanning segment. Residues Gln-34 to Ser-762 are Lumenal-facing. 4 N-linked (GlcNAc...) asparagine glycosylation sites follow: Asn-50, Asn-225, Asn-254, and Asn-383.

The protein belongs to the MNN1/MNT family.

It localises to the golgi apparatus membrane. It participates in protein modification; protein glycosylation. Functionally, responsible for addition of the terminal mannose residues to the outer chain of core N-linked polysaccharides and to O-linked mannotriose. Implicated in late Golgi modifications. This Saccharomyces cerevisiae (strain ATCC 204508 / S288c) (Baker's yeast) protein is Alpha-1,3-mannosyltransferase MNN1 (MNN1).